An 88-amino-acid polypeptide reads, in one-letter code: ATP synthase epsilon chain (88 aa).

It belongs to the ATPase epsilon chain family. As to quaternary structure, F-type ATPases have 2 components, CF(1) - the catalytic core - and CF(0) - the membrane proton channel. CF(1) has five subunits: alpha(3), beta(3), gamma(1), delta(1), epsilon(1). CF(0) has three main subunits: a, b and c.

It is found in the cell inner membrane. Its function is as follows. Produces ATP from ADP in the presence of a proton gradient across the membrane. The polypeptide is ATP synthase epsilon chain (atpC) (Chlorobium limicola).